A 123-amino-acid polypeptide reads, in one-letter code: Plasminogen (123 aa).

The Kringle domain occupies 40–118; the sequence is DCYHGNGQSY…RWEFCNLKKC (79 aa). Cystine bridges form between Cys41/Cys118, Cys62/Cys101, and Cys90/Cys113.

This sequence belongs to the peptidase S1 family. Plasminogen subfamily. Interacts with CSPG4 and AMOT. Interacts (via the Kringle domains) with HRG; the interaction tethers PLG to the cell surface and enhances its activation. Interacts (via Kringle 4 domain) with ADA; the interaction stimulates PLG activation when in complex with DPP4. Angiostatin: Interacts with ATP5F1A; the interaction inhibits most of the angiogenic effects of angiostatin.

Its subcellular location is the secreted. It catalyses the reaction Preferential cleavage: Lys-|-Xaa &gt; Arg-|-Xaa, higher selectivity than trypsin. Converts fibrin into soluble products.. Its activity is regulated as follows. Converted into plasmin by plasminogen activators, both plasminogen and its activator being bound to fibrin. Cannot be activated with streptokinase. In terms of biological role, plasmin dissolves the fibrin of blood clots and acts as a proteolytic factor in a variety of other processes including embryonic development, tissue remodeling, tumor invasion, and inflammation. In ovulation, weakens the walls of the Graafian follicle. It activates the urokinase-type plasminogen activator, collagenases and several complement zymogens, such as C1, C4 and C5. Cleavage of fibronectin and laminin leads to cell detachment and apoptosis. Also cleaves fibrin, thrombospondin and von Willebrand factor. Its role in tissue remodeling and tumor invasion may be modulated by CSPG4. Binds to cells. In Capra hircus (Goat), this protein is Plasminogen (PLG).